The sequence spans 506 residues: Aminoaldehyde dehydrogenase 1b (506 aa).

Asp-102 contacts Na(+). Residues 162–164 (TPW) and 188–191 (KPSE) contribute to the NAD(+) site. Leu-192 lines the Na(+) pocket. Residues 242–245 (SFET) and Glu-263 each bind NAD(+). Glu-263 serves as the catalytic Proton acceptor. Residue Cys-297 is the Nucleophile of the active site. NAD(+)-binding residues include Glu-396 and Trp-462.

The protein belongs to the aldehyde dehydrogenase family.

It catalyses the reaction 4-aminobutanal + NAD(+) + H2O = 4-aminobutanoate + NADH + 2 H(+). It carries out the reaction 3-aminopropanal + NAD(+) + H2O = beta-alanine + NADH + 2 H(+). The catalysed reaction is 4-(trimethylamino)butanal + NAD(+) + H2O = 4-(trimethylamino)butanoate + NADH + 2 H(+). The enzyme catalyses 4-guanidinobutanal + NAD(+) + H2O = 4-guanidinobutanoate + NADH + 2 H(+). It catalyses the reaction betaine aldehyde + NAD(+) + H2O = glycine betaine + NADH + 2 H(+). It functions in the pathway amine and polyamine biosynthesis; betaine biosynthesis via choline pathway; betaine from betaine aldehyde: step 1/1. Functionally, dehydrogenase that catalyzes the oxidation of several aminoaldehydes. Metabolizes and detoxifies aldehyde products of polyamine degradation to non-toxic amino acids. Catalyzes the oxidation of 4-aminobutanal and 3-aminopropanal to 4-aminobutanoate and beta-alanine, respectively. Catalyzes the oxidation of 4-(trimethylamino)butanal and 4-guanidinobutanal to 4-trimethylammoniobutanoate and 4-guanidinobutanoate, respectively. Catalyzes the oxidation of betaine aldehyde to glycine betaine. This is Aminoaldehyde dehydrogenase 1b from Zea mays (Maize).